Reading from the N-terminus, the 446-residue chain is RUN domain-containing protein 3A (446 aa).

An interaction with RAP2A region spans residues Met1–Ala298. The RUN domain maps to Asp52 to Glu189. At Thr215 the chain carries Phosphothreonine. The tract at residues Asp216 to Pro239 is disordered. Phosphoserine is present on Ser232. The stretch at Tyr267–Ile322 forms a coiled coil. Polar residues predominate over residues Pro372–Gln384. The disordered stretch occupies residues Pro372 to Pro403. The segment covering Arg385–Glu394 has biased composition (basic and acidic residues). Phosphoserine occurs at positions 416 and 419.

Belongs to the RUNDC3 family. Interacts with the GTP-bound form of RAP2A. In terms of tissue distribution, brain.

Its function is as follows. May act as an effector of RAP2A in neuronal cells. This is RUN domain-containing protein 3A (Rundc3a) from Mus musculus (Mouse).